The following is a 127-amino-acid chain: MADLAKIVEDLSSLTVLEAAELSKLLEEKWGVSAAAPVAVAAVAGGAGGAAAPAEEEKTEFDVILTDAGANKINVIKEVRAITGLGLKEAKDLVEGAPKAVKEGVSKAEAADIKKKLEDAGAKADVK.

The protein belongs to the bacterial ribosomal protein bL12 family. As to quaternary structure, homodimer. Part of the ribosomal stalk of the 50S ribosomal subunit. Forms a multimeric L10(L12)X complex, where L10 forms an elongated spine to which 2 to 4 L12 dimers bind in a sequential fashion. Binds GTP-bound translation factors.

Its function is as follows. Forms part of the ribosomal stalk which helps the ribosome interact with GTP-bound translation factors. Is thus essential for accurate translation. The chain is Large ribosomal subunit protein bL12 from Rhizobium etli (strain CIAT 652).